We begin with the raw amino-acid sequence, 31 residues long: Sarcolipin (31 aa).

Over 1-7 the chain is Cytoplasmic; the sequence is MERSTQE. The chain crosses the membrane as a helical span at residues 8–26; sequence LFINFTVVLITVLLMWLLV. At 27-31 the chain is on the lumenal side; that stretch reads RSYQY.

Belongs to the sarcolipin family. Homooligomer. Can also form heterooligomers with other sarcoplasmic/endoplasmic reticulum calcium ATPase (SERCA) regulators ARLN, ERLN, PLN and STRIT1/DWORF. Monomer. Interacts with calcium ATPase ATP2A1/SERCA1. Interacts as a monomer with ATP2A2/SERCA2; the interaction decreases ATP2A2 Ca(2+) affinity. Interacts with VMP1; VMP1 competes with PLN and SLN to prevent them from forming an inhibitory complex with ATP2A2.

It is found in the sarcoplasmic reticulum membrane. It localises to the endoplasmic reticulum membrane. In terms of biological role, reversibly inhibits the activity of ATP2A1/SERCA1 and ATP2A2/SERCA2 in sarcoplasmic reticulum by decreasing the apparent affinity of the ATPase for Ca(2+). Also inhibits the activity of ATP2A3/SERCA3. Modulates calcium re-uptake during muscle relaxation and plays an important role in calcium homeostasis in muscle. Required for muscle-based, non-shivering thermogenesis. This Rattus norvegicus (Rat) protein is Sarcolipin (Sln).